A 141-amino-acid chain; its full sequence is Myosin regulatory light chain cdc4 (141 aa).

2 positions are modified to phosphoserine: serine 2 and serine 6. EF-hand domains are found at residues 3–38 (TDDS…CGQN), 74–109 (GDPE…LGEK), and 109–141 (KLSN…ILAN). Ca(2+) is bound by residues aspartate 87, aspartate 89, threonine 91, methionine 93, and glutamate 98.

As to quaternary structure, binds to myosin II chains myo2 and myo3. Interacts with vps27 and a PI 4-kinase pik1. Post-translationally, phosphorylated on either Ser-2 or Ser-6 but not both. Phosphorylation is not essential for the function of the protein.

Its subcellular location is the cytoplasm. Involved in cytokinesis. Required for the formation and function of the contractile ring. The protein is Myosin regulatory light chain cdc4 (cdc4) of Schizosaccharomyces pombe (strain 972 / ATCC 24843) (Fission yeast).